Consider the following 225-residue polypeptide: Biosynthetic peptidoglycan transglycosylase (225 aa).

A helical membrane pass occupies residues Val8 to Val28.

It belongs to the glycosyltransferase 51 family.

The protein localises to the cell inner membrane. It catalyses the reaction [GlcNAc-(1-&gt;4)-Mur2Ac(oyl-L-Ala-gamma-D-Glu-L-Lys-D-Ala-D-Ala)](n)-di-trans,octa-cis-undecaprenyl diphosphate + beta-D-GlcNAc-(1-&gt;4)-Mur2Ac(oyl-L-Ala-gamma-D-Glu-L-Lys-D-Ala-D-Ala)-di-trans,octa-cis-undecaprenyl diphosphate = [GlcNAc-(1-&gt;4)-Mur2Ac(oyl-L-Ala-gamma-D-Glu-L-Lys-D-Ala-D-Ala)](n+1)-di-trans,octa-cis-undecaprenyl diphosphate + di-trans,octa-cis-undecaprenyl diphosphate + H(+). The protein operates within cell wall biogenesis; peptidoglycan biosynthesis. Peptidoglycan polymerase that catalyzes glycan chain elongation from lipid-linked precursors. The chain is Biosynthetic peptidoglycan transglycosylase from Acinetobacter baumannii (strain ACICU).